Reading from the N-terminus, the 217-residue chain is GrpE protein homolog 1, mitochondrial (217 aa).

A mitochondrion-targeting transit peptide spans 1–27 (MAARCVRLARRSLPALALSFRPSPRLL). The disordered stretch occupies residues 37–56 (GQNLDEDLGHCEPKTDPPSA). Lys94 is subject to N6-acetyllysine; alternate. The residue at position 94 (Lys94) is an N6-succinyllysine; alternate. Lys100 bears the N6-acetyllysine mark. Residue Lys120 is modified to N6-succinyllysine. The residue at position 215 (Lys215) is an N6-acetyllysine; alternate. N6-succinyllysine; alternate is present on Lys215.

It belongs to the GrpE family. In terms of assembly, probable component of the PAM complex at least composed of a mitochondrial HSP70 protein, GRPEL1 or GRPEL2, TIMM44, TIMM16/PAM16 and TIMM14/DNAJC19. Binds to HSP70, HSC70 and HSJ1B.

The protein localises to the mitochondrion matrix. Functionally, essential component of the PAM complex, a complex required for the translocation of transit peptide-containing proteins from the inner membrane into the mitochondrial matrix in an ATP-dependent manner. Seems to control the nucleotide-dependent binding of mitochondrial HSP70 to substrate proteins. This is GrpE protein homolog 1, mitochondrial (Grpel1) from Mus musculus (Mouse).